A 204-amino-acid chain; its full sequence is Protein PAXX (204 aa).

The 43-residue stretch at 37 to 79 (FNLYVTDAAELWSTCFTPDSLAALKARFGLSAAEDITPRFRAA) folds into the PISA domain. Position 134 is a phosphoserine (Ser134). A disordered region spans residues 143-204 (EETAVSPRKS…PAGGVDFDET (62 aa)). Residue Thr145 is modified to Phosphothreonine. 2 positions are modified to phosphoserine: Ser148 and Ser152. The segment at 171–204 (GPGPGVRRRCPGESLINPGFKSKKPAGGVDFDET) is mediates interaction with XRCC5/Ku80 and XRCC6/Ku70 and association with the non-homologous end joining core complex. Residues 190-204 (FKSKKPAGGVDFDET) carry the XLM motif.

It belongs to the XRCC4-XLF family. PAXX subfamily. In terms of assembly, homodimer. Interacts with the DNA-bound XRCC5/Ku80 and XRCC6/Ku70 heterodimer (Ku complex); the interaction is direct. Associated component of the non-homologous end joining (NHEJ) complex, composed of the core proteins PRKDC, LIG4, XRCC4, XRCC6/Ku70, XRCC5/Ku86 and NHEJ1/XLF. Interacts with POLL (DNA polymerase lambda); promoting POLL recruitment to double-strand breaks (DSBs) and stimulation of the end-filling activity of POLL. In terms of processing, phosphorylation may inhibit interaction with the DNA-bound XRCC5/Ku80 and XRCC6/Ku70 heterodimer (Ku complex).

The protein localises to the nucleus. Its subcellular location is the chromosome. The protein resides in the cytoplasm. Non-essential DNA repair protein involved in DNA non-homologous end joining (NHEJ); participates in double-strand break (DSB) repair and V(D)J recombination. May act as a scaffold required for accumulation of the Ku heterodimer, composed of XRCC5/Ku80 and XRCC6/Ku70, at double-strand break sites and promote the assembly and/or stability of the NHEJ machinery. Involved in NHEJ by promoting the ligation of blunt-ended DNA ends. Together with NHEJ1/XLF, collaborates with DNA polymerase lambda (POLL) to promote joining of non-cohesive DNA ends. Constitutes a non-essential component of classical NHEJ: has a complementary but distinct function with NHEJ1/XLF in DNA repair. Able to restrict infection by herpesvirus 1 (HSV-1) via an unknown mechanism. This chain is Protein PAXX, found in Homo sapiens (Human).